The sequence spans 684 residues: UvrABC system protein B (684 aa).

The region spanning 30–188 (EGVQRGDRWQ…QELVSLHYVR (159 aa)) is the Helicase ATP-binding domain. 43-50 (GVTGSGKT) serves as a coordination point for ATP. Residues 96–119 (YYDFYQPEAYLPALDKYIAKDLRI) carry the Beta-hairpin motif. The Helicase C-terminal domain occupies 435 to 601 (QIDDLLGEIR…SIIKSVEQVL (167 aa)). Positions 641–676 (YSMAESLRLEMQEAALKMEYEKAAYLRDEITKFEHR) constitute a UVR domain.

Belongs to the UvrB family. As to quaternary structure, forms a heterotetramer with UvrA during the search for lesions. Interacts with UvrC in an incision complex.

Its subcellular location is the cytoplasm. The UvrABC repair system catalyzes the recognition and processing of DNA lesions. A damage recognition complex composed of 2 UvrA and 2 UvrB subunits scans DNA for abnormalities. Upon binding of the UvrA(2)B(2) complex to a putative damaged site, the DNA wraps around one UvrB monomer. DNA wrap is dependent on ATP binding by UvrB and probably causes local melting of the DNA helix, facilitating insertion of UvrB beta-hairpin between the DNA strands. Then UvrB probes one DNA strand for the presence of a lesion. If a lesion is found the UvrA subunits dissociate and the UvrB-DNA preincision complex is formed. This complex is subsequently bound by UvrC and the second UvrB is released. If no lesion is found, the DNA wraps around the other UvrB subunit that will check the other stand for damage. The protein is UvrABC system protein B of Chlorobium limicola (strain DSM 245 / NBRC 103803 / 6330).